We begin with the raw amino-acid sequence, 261 residues long: 4-phosphopantoate--beta-alanine ligase (261 aa).

ATP contacts are provided by residues Arg17, Arg39, 181-183 (DLN), 187-188 (RS), and 199-200 (NI).

Belongs to the archaeal phosphopantothenate synthetase family. As to quaternary structure, homodimer.

The enzyme catalyses (R)-4-phosphopantoate + beta-alanine + ATP = (R)-4'-phosphopantothenate + AMP + diphosphate + H(+). The protein operates within cofactor biosynthesis; coenzyme A biosynthesis. Its activity is regulated as follows. Activity is not affected by 4'-phosphopantothenate or CoA/acetyl-CoA. Its function is as follows. Catalyzes the condensation of (R)-4-phosphopantoate and beta-alanine to 4'-phosphopantothenate in the CoA biosynthesis pathway. Cannot use (R)-pantoate as substrate and thus does not display pantothenate synthetase (PS) activity. Displays strict specificity for its natural substrates, 4-phosphopantoate, ATP and beta-alanine. The sequence is that of 4-phosphopantoate--beta-alanine ligase from Thermococcus kodakarensis (strain ATCC BAA-918 / JCM 12380 / KOD1) (Pyrococcus kodakaraensis (strain KOD1)).